The chain runs to 101 residues: Small ribosomal subunit protein uS14 (101 aa).

Residues 1–10 (MAKKSSIEKN) are compositionally biased toward basic and acidic residues. Positions 1 to 23 (MAKKSSIEKNNRRRKMTKNAAPK) are disordered. The segment covering 11–23 (NRRRKMTKNAAPK) has biased composition (basic residues).

It belongs to the universal ribosomal protein uS14 family. Part of the 30S ribosomal subunit. Contacts proteins S3 and S10.

Binds 16S rRNA, required for the assembly of 30S particles and may also be responsible for determining the conformation of the 16S rRNA at the A site. The protein is Small ribosomal subunit protein uS14 of Rhodopseudomonas palustris (strain BisB5).